Reading from the N-terminus, the 149-residue chain is Putative pre-16S rRNA nuclease (149 aa).

This sequence belongs to the YqgF nuclease family.

Its subcellular location is the cytoplasm. Its function is as follows. Could be a nuclease involved in processing of the 5'-end of pre-16S rRNA. The sequence is that of Putative pre-16S rRNA nuclease from Burkholderia ambifaria (strain MC40-6).